The following is a 571-amino-acid chain: Isthmin-2 (571 aa).

The signal sequence occupies residues methionine 1 to glycine 26. Disordered stretches follow at residues lysine 30–glutamate 60, alanine 116–glutamate 141, and glutamate 257–glutamate 294. Residues alanine 116–alanine 131 are compositionally biased toward polar residues. N-linked (GlcNAc...) asparagine glycosylation is present at asparagine 117. Over residues glutamate 257–glutamate 268 the composition is skewed to basic and acidic residues. The segment covering lysine 269–glutamate 294 has biased composition (acidic residues). N-linked (GlcNAc...) asparagine glycosylation occurs at asparagine 300. A TSP type-1 domain is found at glutamate 327 to proline 371. Disulfide bonds link cysteine 338–cysteine 365, cysteine 342–cysteine 370, and cysteine 353–cysteine 357. Asparagine 392 is a glycosylation site (N-linked (GlcNAc...) asparagine). Residues methionine 396–glutamate 559 form the AMOP domain.

It belongs to the isthmin family. Expressed at high levels in the placenta and at moderate levels in the pancreas, kidney, heart, liver, lung, brain and skeletal muscle.

The protein resides in the secreted. This chain is Isthmin-2 (ISM2), found in Homo sapiens (Human).